The primary structure comprises 228 residues: Ribose-5-phosphate isomerase A (228 aa).

Residues 32 to 35, 85 to 88, and 98 to 101 contribute to the substrate site; these read TGST, DGAD, and KGGG. Glu-107 (proton acceptor) is an active-site residue. Lys-125 is a substrate binding site.

This sequence belongs to the ribose 5-phosphate isomerase family. Homodimer.

It catalyses the reaction aldehydo-D-ribose 5-phosphate = D-ribulose 5-phosphate. It participates in carbohydrate degradation; pentose phosphate pathway; D-ribose 5-phosphate from D-ribulose 5-phosphate (non-oxidative stage): step 1/1. In terms of biological role, catalyzes the reversible conversion of ribose-5-phosphate to ribulose 5-phosphate. The sequence is that of Ribose-5-phosphate isomerase A from Cupriavidus taiwanensis (strain DSM 17343 / BCRC 17206 / CCUG 44338 / CIP 107171 / LMG 19424 / R1) (Ralstonia taiwanensis (strain LMG 19424)).